We begin with the raw amino-acid sequence, 599 residues long: Laccase-15 (599 aa).

Residues 1–29 (MKRCQSSRPTAAVAAVVAAVSMIIVLVSG) form the signal peptide. 2 Plastocyanin-like domains span residues 46-162 (VVSQ…PRHG) and 173-328 (REVP…YSSN). Residues Asn-51 and Asn-92 are each glycosylated (N-linked (GlcNAc...) asparagine). Residues His-96 and His-98 each contribute to the Cu cation site. An N-linked (GlcNAc...) asparagine glycan is attached at Asn-124. Cu cation is bound by residues His-141 and His-143. Asn-193, Asn-217, Asn-331, Asn-355, Asn-412, and Asn-454 each carry an N-linked (GlcNAc...) asparagine glycan. In terms of domain architecture, Plastocyanin-like 3 spans 444 to 586 (ELAERPPRAY…AAVFIVEDGP (143 aa)). Cu cation-binding residues include Asn-503, His-506, His-508, His-565, Cys-566, His-567, His-571, and Met-576.

Belongs to the multicopper oxidase family. It depends on Cu cation as a cofactor.

The protein resides in the secreted. The protein localises to the extracellular space. It is found in the apoplast. The catalysed reaction is 4 hydroquinone + O2 = 4 benzosemiquinone + 2 H2O. In terms of biological role, lignin degradation and detoxification of lignin-derived products. This chain is Laccase-15 (LAC15), found in Oryza sativa subsp. japonica (Rice).